The sequence spans 139 residues: Large ribosomal subunit protein uL16 (139 aa).

The protein belongs to the universal ribosomal protein uL16 family. Part of the 50S ribosomal subunit.

Binds 23S rRNA and is also seen to make contacts with the A and possibly P site tRNAs. The chain is Large ribosomal subunit protein uL16 from Koribacter versatilis (strain Ellin345).